A 2069-amino-acid polypeptide reads, in one-letter code: Dedicator of cytokinesis protein 9 (2069 aa).

Phosphoserine occurs at positions 21, 32, 167, and 170. Residues 174–281 enclose the PH domain; that stretch reads GITKHGWLYK…WITILNKILQ (108 aa). The interval 290–313 is disordered; it reads EKRNGDSHEDDEQSKLEGSGSGLD. Residues Ser-433 and Ser-443 each carry the phosphoserine modification. Positions 640-818 constitute a C2 DOCK-type domain; sequence TNHLYVYPKY…PLLKISTHLV (179 aa). A phosphoserine mark is found at Ser-927 and Ser-1235. Thr-1241 carries the post-translational modification Phosphothreonine. The disordered stretch occupies residues 1241-1282; it reads TPNINSVRNADSRGSLISTDSGNSLPERNSEKSNSLDKHQQS. A phosphoserine mark is found at Ser-1255, Ser-1261, and Ser-1264. Over residues 1255–1267 the composition is skewed to polar residues; that stretch reads SLISTDSGNSLPE. Residues 1268–1280 show a composition bias toward basic and acidic residues; it reads RNSEKSNSLDKHQ. The 465-residue stretch at 1605-2069 folds into the DOCKER domain; the sequence is KSYASTPELR…LSEIMHEQLG (465 aa). Positions 1693–2069 are interaction with CDC42; sequence DEEASMMEDV…LSEIMHEQLG (377 aa). 2 coiled-coil regions span residues 1948-1982 and 2034-2067; these read IEVA…KLQG and NERL…MHEQ.

It belongs to the DOCK family. In terms of assembly, homodimer. Interacts preferentially with nucleotide-depleted CDC42. Widely expressed, with highest expression in heart and placenta. Expressed at intermediate level in kidney, brain, lung and skeletal muscle.

The protein localises to the endomembrane system. Guanine nucleotide-exchange factor (GEF) that activates CDC42 by exchanging bound GDP for free GTP. Overexpression induces filopodia formation. In Homo sapiens (Human), this protein is Dedicator of cytokinesis protein 9.